Here is a 314-residue protein sequence, read N- to C-terminus: Protoheme IX farnesyltransferase (314 aa).

8 consecutive transmembrane segments (helical) span residues 30-50, 51-71, 122-142, 151-171, 178-198, 224-244, 247-267, and 285-305; these read VMSL…VSVH, PVIG…SGAL, FLAA…YSMW, IVIG…IATG, WLMF…LALF, IIAY…SAIG, VYLA…IDIW, and FFRL…LESA.

Belongs to the UbiA prenyltransferase family. Protoheme IX farnesyltransferase subfamily. In terms of assembly, interacts with CtaA.

It localises to the cell inner membrane. The enzyme catalyses heme b + (2E,6E)-farnesyl diphosphate + H2O = Fe(II)-heme o + diphosphate. It participates in porphyrin-containing compound metabolism; heme O biosynthesis; heme O from protoheme: step 1/1. Functionally, converts heme B (protoheme IX) to heme O by substitution of the vinyl group on carbon 2 of heme B porphyrin ring with a hydroxyethyl farnesyl side group. The sequence is that of Protoheme IX farnesyltransferase from Roseobacter denitrificans (strain ATCC 33942 / OCh 114) (Erythrobacter sp. (strain OCh 114)).